Here is a 241-residue protein sequence, read N- to C-terminus: Lipopolysaccharide export system ATP-binding protein LptB (241 aa).

The ABC transporter domain maps to 5-237; sequence LQAQSLFKSY…PMVRQVYLGD (233 aa). Residue 37–44 coordinates ATP; sequence GPNGAGKT.

It belongs to the ABC transporter superfamily. Outer membrane lipopolysaccharide export (TC 1.B.42) family. In terms of assembly, component of the lipopolysaccharide transport and assembly complex. The LptBFG transporter is composed of two ATP-binding proteins (LptB) and two transmembrane proteins (LptF and LptG).

It localises to the cytoplasm. The protein resides in the cell inner membrane. In terms of biological role, part of the ABC transporter complex LptBFG involved in the translocation of lipopolysaccharide (LPS) from the inner membrane to the outer membrane. Probably responsible for energy coupling to the transport system. This Acidithiobacillus ferridurans protein is Lipopolysaccharide export system ATP-binding protein LptB (lptB).